A 256-amino-acid chain; its full sequence is Small ribosomal subunit protein eS1 (256 aa).

Residues 1–18 (MAVGKNKRLSKGKKGLKK) are compositionally biased toward basic residues. The interval 1–20 (MAVGKNKRLSKGKKGLKKKA) is disordered. N-acetylalanine; partial is present on A2.

Belongs to the eukaryotic ribosomal protein eS1 family. Component of the small ribosomal subunit. Mature ribosomes consist of a small (40S) and a large (60S) subunit. The 40S subunit contains about 33 different proteins and 1 molecule of RNA (18S). The 60S subunit contains about 49 different proteins and 3 molecules of RNA (25S, 5.8S and 5S).

It localises to the cytoplasm. The chain is Small ribosomal subunit protein eS1 from Chaetomium globosum (strain ATCC 6205 / CBS 148.51 / DSM 1962 / NBRC 6347 / NRRL 1970) (Soil fungus).